Here is a 32-residue protein sequence, read N- to C-terminus: Photosystem II reaction center protein T (32 aa).

Residues 3–23 traverse the membrane as a helical segment; that stretch reads ALVYTFLLIGTLMVIFFAVFF.

This sequence belongs to the PsbT family. As to quaternary structure, PSII is composed of 1 copy each of membrane proteins PsbA, PsbB, PsbC, PsbD, PsbE, PsbF, PsbH, PsbI, PsbJ, PsbK, PsbL, PsbM, PsbT, PsbX, PsbY, PsbZ, Psb30/Ycf12, at least 3 peripheral proteins of the oxygen-evolving complex and a large number of cofactors. It forms dimeric complexes.

The protein resides in the plastid. Its subcellular location is the chloroplast thylakoid membrane. Found at the monomer-monomer interface of the photosystem II (PS II) dimer, plays a role in assembly and dimerization of PSII. PSII is a light-driven water plastoquinone oxidoreductase, using light energy to abstract electrons from H(2)O, generating a proton gradient subsequently used for ATP formation. This Trieres chinensis (Marine centric diatom) protein is Photosystem II reaction center protein T.